We begin with the raw amino-acid sequence, 252 residues long: Endonuclease NucS (252 aa).

Belongs to the NucS endonuclease family.

It is found in the cytoplasm. Functionally, cleaves both 3' and 5' ssDNA extremities of branched DNA structures. The protein is Endonuclease NucS of Thermococcus kodakarensis (strain ATCC BAA-918 / JCM 12380 / KOD1) (Pyrococcus kodakaraensis (strain KOD1)).